A 342-amino-acid polypeptide reads, in one-letter code: Isopentenyl-diphosphate delta-isomerase (342 aa).

R6–K7 serves as a coordination point for substrate. Residues S63, S64–T66, S94, and N122 contribute to the FMN site. S94–R96 contacts substrate. Q157 lines the substrate pocket. E158 serves as a coordination point for Mg(2+). Residues K189, T219, G269–K271, and A290–G291 contribute to the FMN site.

The protein belongs to the IPP isomerase type 2 family. In terms of assembly, homooctamer. Dimer of tetramers. FMN serves as cofactor. The cofactor is NADPH. Mg(2+) is required as a cofactor.

It is found in the cytoplasm. It catalyses the reaction isopentenyl diphosphate = dimethylallyl diphosphate. Involved in the biosynthesis of isoprenoids. Catalyzes the 1,3-allylic rearrangement of the homoallylic substrate isopentenyl (IPP) to its allylic isomer, dimethylallyl diphosphate (DMAPP). This chain is Isopentenyl-diphosphate delta-isomerase, found in Rickettsia bellii (strain RML369-C).